A 139-amino-acid chain; its full sequence is 6,7-dimethyl-8-ribityllumazine synthase (139 aa).

5-amino-6-(D-ribitylamino)uracil-binding positions include F11, 42-44 (ALE), and 66-68 (VVI). Position 71-72 (71-72 (ET)) interacts with (2S)-2-hydroxy-3-oxobutyl phosphate. H74 acts as the Proton donor in catalysis. N98 lines the 5-amino-6-(D-ribitylamino)uracil pocket. Position 112 (R112) interacts with (2S)-2-hydroxy-3-oxobutyl phosphate.

It belongs to the DMRL synthase family.

The catalysed reaction is (2S)-2-hydroxy-3-oxobutyl phosphate + 5-amino-6-(D-ribitylamino)uracil = 6,7-dimethyl-8-(1-D-ribityl)lumazine + phosphate + 2 H2O + H(+). Its pathway is cofactor biosynthesis; riboflavin biosynthesis; riboflavin from 2-hydroxy-3-oxobutyl phosphate and 5-amino-6-(D-ribitylamino)uracil: step 1/2. Functionally, catalyzes the formation of 6,7-dimethyl-8-ribityllumazine by condensation of 5-amino-6-(D-ribitylamino)uracil with 3,4-dihydroxy-2-butanone 4-phosphate. This is the penultimate step in the biosynthesis of riboflavin. The protein is 6,7-dimethyl-8-ribityllumazine synthase of Novosphingobium aromaticivorans (strain ATCC 700278 / DSM 12444 / CCUG 56034 / CIP 105152 / NBRC 16084 / F199).